The sequence spans 532 residues: Phosphoenolpyruvate carboxykinase (ATP) (532 aa).

Substrate is bound by residues R60, Y195, and K201. Residues K201, H221, and 237-245 (GLSGTGKTT) contribute to the ATP site. Residues K201 and H221 each coordinate Mn(2+). Residue D258 coordinates Mn(2+). ATP contacts are provided by E287, R323, and T448. Substrate is bound at residue R323.

It belongs to the phosphoenolpyruvate carboxykinase (ATP) family. Mn(2+) serves as cofactor.

Its subcellular location is the cytoplasm. The catalysed reaction is oxaloacetate + ATP = phosphoenolpyruvate + ADP + CO2. The protein operates within carbohydrate biosynthesis; gluconeogenesis. In terms of biological role, involved in the gluconeogenesis. Catalyzes the conversion of oxaloacetate (OAA) to phosphoenolpyruvate (PEP) through direct phosphoryl transfer between the nucleoside triphosphate and OAA. The sequence is that of Phosphoenolpyruvate carboxykinase (ATP) from Christiangramia forsetii (strain DSM 17595 / CGMCC 1.15422 / KT0803) (Gramella forsetii).